A 448-amino-acid chain; its full sequence is Probable glycine dehydrogenase (decarboxylating) subunit 1 (448 aa).

Belongs to the GcvP family. N-terminal subunit subfamily. In terms of assembly, the glycine cleavage system is composed of four proteins: P, T, L and H. In this organism, the P 'protein' is a heterodimer of two subunits.

The enzyme catalyses N(6)-[(R)-lipoyl]-L-lysyl-[glycine-cleavage complex H protein] + glycine + H(+) = N(6)-[(R)-S(8)-aminomethyldihydrolipoyl]-L-lysyl-[glycine-cleavage complex H protein] + CO2. Functionally, the glycine cleavage system catalyzes the degradation of glycine. The P protein binds the alpha-amino group of glycine through its pyridoxal phosphate cofactor; CO(2) is released and the remaining methylamine moiety is then transferred to the lipoamide cofactor of the H protein. The polypeptide is Probable glycine dehydrogenase (decarboxylating) subunit 1 (Listeria monocytogenes serotype 4a (strain HCC23)).